A 347-amino-acid polypeptide reads, in one-letter code: Protein-glutamate methylesterase/protein-glutamine glutaminase (347 aa).

The Response regulatory domain occupies 3-119; sequence EALVVDDSHF…STELSGHSEE (117 aa). D53 carries the post-translational modification 4-aspartylphosphate. The interval 132-154 is disordered; it reads PTAGHDVEMEPASPPDATTSEYA. A CheB-type methylesterase domain is found at 152–346; the sequence is EYADNPTLLI…EAIADSIRRT (195 aa). Catalysis depends on residues S164, H191, and D288.

It belongs to the CheB family. In terms of processing, phosphorylated by CheA. Phosphorylation of the N-terminal regulatory domain activates the methylesterase activity.

The protein localises to the cytoplasm. The catalysed reaction is [protein]-L-glutamate 5-O-methyl ester + H2O = L-glutamyl-[protein] + methanol + H(+). It carries out the reaction L-glutaminyl-[protein] + H2O = L-glutamyl-[protein] + NH4(+). Functionally, involved in the modulation of the chemotaxis system; catalyzes the demethylation of specific methylglutamate residues introduced into the Htr transducer proteins (methyl-accepting chemotaxis proteins) by CheR. Also required for Htr deamidations, at least at a specific glutamine-glutamate pair in HTR-II and a specific aspartate-glutamine pair in Htr4. The sequence is that of Protein-glutamate methylesterase/protein-glutamine glutaminase from Halobacterium salinarum (strain ATCC 29341 / DSM 671 / R1).